A 560-amino-acid polypeptide reads, in one-letter code: MKVWMAILISILCWQSSAWAVCPAWSPARAQEEISRLQQQIKQWDDDYWKEGKSEVEDGVYDQLSARLTQWQRCFGNETPDVMMPPLNGAVIHPVAHTGVRKMADKIALSLWMRERSDLWVQPKVDGVAVTLVYRDGKLNKAISRGNGLKGEDWTQKVRLISAVPQTVSGPLANSTLQGEIFLKREGHIQQQMGGINARAKVAGLMMRQDDSDTLNSLGVFVWAWPDGPQLMTDRLKELATAGFTLTQTYTRAVKNADEVARVRNAWWKAKLPFVTDGVVVRAAKEPESRHWLPGQAEWLVAWKYQPVAQVAEVKTIQFAVGKSGKISVVASLAPVMLDDKKVQRVNIGSVRRWQEWDIAPGDQILVSLAGQGIPRIDDVVWRGAERTKPTPPENRFNSLTCYFASDVCQEQFISRLVWLGSKQVLGLDGIGEAGWRALHQTHRFEHIFSWLLLTPEQLQNTPGIAKSKSAQLWHQFNLARKQPFTRWVMAMGIPLTRAALNASDERSWSQLLLSTEQFWQQLPGTGSGRARQVIEWKENAQIKKLGSWLAAQQITGFEP.

Residue Lys-124 is the N6-AMP-lysine intermediate of the active site.

The protein belongs to the NAD-dependent DNA ligase family. LigB subfamily.

It catalyses the reaction NAD(+) + (deoxyribonucleotide)n-3'-hydroxyl + 5'-phospho-(deoxyribonucleotide)m = (deoxyribonucleotide)n+m + AMP + beta-nicotinamide D-nucleotide.. Its function is as follows. Catalyzes the formation of phosphodiester linkages between 5'-phosphoryl and 3'-hydroxyl groups in double-stranded DNA using NAD as a coenzyme and as the energy source for the reaction. This Escherichia coli O17:K52:H18 (strain UMN026 / ExPEC) protein is DNA ligase B.